The chain runs to 309 residues: Probable manganese-dependent inorganic pyrophosphatase (309 aa).

Residues His9, Asp13, Asp15, Asp75, His97, and Asp149 each coordinate Mn(2+).

The protein belongs to the PPase class C family. Mn(2+) is required as a cofactor.

It localises to the cytoplasm. The catalysed reaction is diphosphate + H2O = 2 phosphate + H(+). In Bacillus cereus (strain B4264), this protein is Probable manganese-dependent inorganic pyrophosphatase.